The following is a 135-amino-acid chain: MAKQQSASAASQRARKKVKKNVADGIAHVHASFNNTIITITDRQGNALSWATSGGQGFKGSRKSTPFAAQVAAEVAGKAAVECGIKNLEVQIKGPGPGRESAVRALNSLGIKITEIQDVTPVPHNGCRPPKRRRI.

Belongs to the universal ribosomal protein uS11 family. As to quaternary structure, part of the 30S ribosomal subunit. Interacts with proteins S7 and S18. Binds to IF-3.

Located on the platform of the 30S subunit, it bridges several disparate RNA helices of the 16S rRNA. Forms part of the Shine-Dalgarno cleft in the 70S ribosome. This is Small ribosomal subunit protein uS11 from Polynucleobacter asymbioticus (strain DSM 18221 / CIP 109841 / QLW-P1DMWA-1) (Polynucleobacter necessarius subsp. asymbioticus).